The chain runs to 435 residues: GTPase Obg (435 aa).

The region spanning 6 to 164 (ADFVDRVKIF…RWLELELKIL (159 aa)) is the Obg domain. The region spanning 165–335 (ADVGLVGYPN…LVSKLASIVR (171 aa)) is the OBG-type G domain. Residues 171–178 (GYPNVGKS), 196–200 (FTTLI), 217–220 (DIPG), 287–290 (NKID), and 316–318 (SAV) contribute to the GTP site. Mg(2+) contacts are provided by Ser178 and Thr198. The region spanning 357 to 435 (RRLPEKFHLE…IGDFEFEYRE (79 aa)) is the OCT domain.

This sequence belongs to the TRAFAC class OBG-HflX-like GTPase superfamily. OBG GTPase family. As to quaternary structure, monomer. Mg(2+) serves as cofactor.

It is found in the cytoplasm. In terms of biological role, an essential GTPase which binds GTP, GDP and possibly (p)ppGpp with moderate affinity, with high nucleotide exchange rates and a fairly low GTP hydrolysis rate. Plays a role in control of the cell cycle, stress response, ribosome biogenesis and in those bacteria that undergo differentiation, in morphogenesis control. In Thermotoga maritima (strain ATCC 43589 / DSM 3109 / JCM 10099 / NBRC 100826 / MSB8), this protein is GTPase Obg.